A 134-amino-acid chain; its full sequence is Phosphoribosyl-AMP cyclohydrolase (134 aa).

Asp80 serves as a coordination point for Mg(2+). A Zn(2+)-binding site is contributed by Cys81. Residues Asp82 and Asp84 each coordinate Mg(2+). Zn(2+)-binding residues include Cys98 and Cys105.

The protein belongs to the PRA-CH family. Homodimer. It depends on Mg(2+) as a cofactor. Zn(2+) serves as cofactor.

Its subcellular location is the cytoplasm. The catalysed reaction is 1-(5-phospho-beta-D-ribosyl)-5'-AMP + H2O = 1-(5-phospho-beta-D-ribosyl)-5-[(5-phospho-beta-D-ribosylamino)methylideneamino]imidazole-4-carboxamide. The protein operates within amino-acid biosynthesis; L-histidine biosynthesis; L-histidine from 5-phospho-alpha-D-ribose 1-diphosphate: step 3/9. Catalyzes the hydrolysis of the adenine ring of phosphoribosyl-AMP. This Herminiimonas arsenicoxydans protein is Phosphoribosyl-AMP cyclohydrolase.